Consider the following 212-residue polypeptide: External core antigen (212 aa).

The signal sequence occupies residues 1–19 (MQLFHLCLIISCSCPTVQA). The segment at 25-27 (GWL) is HBEAG. Residues 165–212 (NAPILSTLPETTVVRRRGRSPRRRTPSPRRRRSQSPRRRRSQSRESQC) form a disordered region. Over residues 178–205 (VRRRGRSPRRRTPSPRRRRSQSPRRRRS) the composition is skewed to basic residues. The 1; half-length repeat unit spans residues 184-190 (SPRRRTP). Residues 184–206 (SPRRRTPSPRRRRSQSPRRRRSQ) form a 3 X 8 AA repeats of S-P-R-R-R-R-S-Q region. Positions 184–212 (SPRRRTPSPRRRRSQSPRRRRSQSRESQC) are excised as a propeptide. Repeat copies occupy residues 191 to 198 (SPRRRRSQ) and 199 to 206 (SPRRRRSQ).

This sequence belongs to the orthohepadnavirus precore antigen family. As to quaternary structure, homodimerizes. Post-translationally, phosphorylated. Cleaved by host furin.

The protein localises to the secreted. The protein resides in the host nucleus. Functionally, may regulate immune response to the intracellular capsid in acting as a T-cell tolerogen, by having an immunoregulatory effect which prevents destruction of infected cells by cytotoxic T-cells. This immune regulation may predispose to chronicity during perinatal infections and prevent severe liver injury during adult infections. This chain is External core antigen, found in Homo sapiens (Human).